The sequence spans 385 residues: Putative nickel insertion protein (385 aa).

Belongs to the LarC family.

This Citrifermentans bemidjiense (strain ATCC BAA-1014 / DSM 16622 / JCM 12645 / Bem) (Geobacter bemidjiensis) protein is Putative nickel insertion protein.